Reading from the N-terminus, the 180-residue chain is Chromosome-anchoring protein RacA (180 aa).

Residues 5–25 (TPFIAKKLGVSPKAVVRIAQQ) constitute a DNA-binding region (H-T-H motif). Residues 67–151 (KASSNEVEEL…LEAALTKEEP (85 aa)) adopt a coiled-coil conformation.

It belongs to the RacA family.

Its subcellular location is the cytoplasm. Required for the formation of axial filaments and for anchoring the origin regions at the cell poles in sporulating cells, thus ensuring proper chromosome segregation in the prespore. Binds in a dispersed manner throughout the chromosome but preferentially to sites clustered in the origin portion of the chromosome, causing condensation of the chromosome and its remodeling into an elongated, anchored structure. This is Chromosome-anchoring protein RacA from Bacillus cereus (strain B4264).